The following is a 467-amino-acid chain: UDP-N-acetylmuramate--L-alanine ligase (467 aa).

114–120 serves as a coordination point for ATP; that stretch reads GTHGKTT.

This sequence belongs to the MurCDEF family.

It localises to the cytoplasm. The catalysed reaction is UDP-N-acetyl-alpha-D-muramate + L-alanine + ATP = UDP-N-acetyl-alpha-D-muramoyl-L-alanine + ADP + phosphate + H(+). The protein operates within cell wall biogenesis; peptidoglycan biosynthesis. Functionally, cell wall formation. The chain is UDP-N-acetylmuramate--L-alanine ligase from Nitrobacter hamburgensis (strain DSM 10229 / NCIMB 13809 / X14).